The chain runs to 435 residues: GTPase Der (435 aa).

EngA-type G domains follow at residues 4-167 (PVVA…PAEK) and 175-350 (ISFS…DNQN). Residues 10–17 (GQPNVGKS), 57–61 (DTGGI), 119–122 (NKAD), 181–188 (GRPNVGKS), 228–232 (DTAGI), and 293–296 (NKWD) each bind GTP. One can recognise a KH-like domain in the interval 351-435 (QRIQSSVLND…PIKILPRKRK (85 aa)).

It belongs to the TRAFAC class TrmE-Era-EngA-EngB-Septin-like GTPase superfamily. EngA (Der) GTPase family. Associates with the 50S ribosomal subunit.

Functionally, GTPase that plays an essential role in the late steps of ribosome biogenesis. The sequence is that of GTPase Der from Lactobacillus acidophilus (strain ATCC 700396 / NCK56 / N2 / NCFM).